A 452-amino-acid chain; its full sequence is UDP-N-acetylmuramoylalanine--D-glutamate ligase (452 aa).

Gly119–Thr125 lines the ATP pocket.

Belongs to the MurCDEF family.

The protein localises to the cytoplasm. The enzyme catalyses UDP-N-acetyl-alpha-D-muramoyl-L-alanine + D-glutamate + ATP = UDP-N-acetyl-alpha-D-muramoyl-L-alanyl-D-glutamate + ADP + phosphate + H(+). The protein operates within cell wall biogenesis; peptidoglycan biosynthesis. Cell wall formation. Catalyzes the addition of glutamate to the nucleotide precursor UDP-N-acetylmuramoyl-L-alanine (UMA). The chain is UDP-N-acetylmuramoylalanine--D-glutamate ligase (murD) from Streptococcus pyogenes serotype M1.